A 1060-amino-acid chain; its full sequence is Protocadherin-1 (1060 aa).

Positions 1-57 (MDSGAGGRRCPEAALLILGPPRMEHLRHSPGPGGQRLLLPSMLLALLLLLAPSPGHA) are cleaved as a signal peptide. Cadherin domains follow at residues 58–168 (TRVV…TPNF), 169–280 (ASPV…APKF), 281–387 (ERPS…APTI), 396–506 (THQD…APVF), 507–612 (TQSV…DPKF), 613–715 (MLSG…APYI), and 718–844 (PSNT…DPEY). Residues 58 to 852 (TRVVYKVPEE…EYERSKQRGN (795 aa)) are Extracellular-facing. N-linked (GlcNAc...) asparagine glycans are attached at residues N305 and N403. Residues N618, N662, N813, and N818 are each glycosylated (N-linked (GlcNAc...) asparagine). The chain crosses the membrane as a helical span at residues 853–873 (ILFGVVAGVVAVALLIALAVL). Over 874-1060 (VRYCRQREAK…HGAIWTEVWE (187 aa)) the chain is Cytoplasmic. The span at 884 to 897 (SGYQAGKKETKDLY) shows a compositional bias: basic and acidic residues. The interval 884–1045 (SGYQAGKKET…QPFQLSTPQP (162 aa)) is disordered. Basic residues predominate over residues 907–920 (KGNKSKGKKSKSPK). Phosphoserine occurs at positions 918, 949, 962, and 984. The segment covering 973–986 (SPLPSIQLQPQSPS) has biased composition (low complexity). 2 stretches are compositionally biased toward polar residues: residues 1003-1024 (FVGT…SYRT) and 1033-1043 (QVGQPFQLSTP).

Highly expressed in the brain and neuro-glial cells.

Its subcellular location is the cell junction. It is found in the cell membrane. Its function is as follows. May be involved in cell-cell interaction processes and in cell adhesion. The sequence is that of Protocadherin-1 (PCDH1) from Homo sapiens (Human).